The chain runs to 141 residues: VHWSEVELHEITTTWKSIDKHSLGAKALARMFIVYPWTTRYFGNLKEFTACSYGVKEHAKKVTGALGVAVTHLGDVKSQFTDLSKKHAEELHVDVESFKLLAKCFVVELGILLKDKFAPQTQAIWEKYFGVVVDAISKEYH.

A Globin domain is found at 2–141 (HWSEVELHEI…VVDAISKEYH (140 aa)). 2 residues coordinate heme b: His58 and His87.

Belongs to the globin family. As to quaternary structure, heterotetramer of two alpha chains and two beta chains. In terms of tissue distribution, red blood cells.

Its function is as follows. Involved in oxygen transport from the lung to the various peripheral tissues. This chain is Hemoglobin subunit beta (HBB), found in Heterodontus portusjacksoni (Port Jackson shark).